A 198-amino-acid polypeptide reads, in one-letter code: MSKVLVLYYSMYGHVETLAQAVAEGARGAGSEVVIKRVPETMPEDVARQAGAKLDQEAPVASLEELADYDAILFGTPTRFGNMAGQMRNFLDQTGSLWFNGQLIGKVGSVFTSTGTGGGNETTITSFWHTLAHHGMVIVGLSYAAPELADLSVVKGGSPYGAGTIAGGDGSRQPNEQELALARYQGRHVAEIAQRLHG.

Residues V4 to V189 enclose the Flavodoxin-like domain. Residues S10–V15 and T78–F80 each bind FMN. Y12 contacts NAD(+). W98 is a binding site for substrate. Residues S113–G118 and H133 contribute to the FMN site.

The protein belongs to the WrbA family. Requires FMN as cofactor.

It carries out the reaction a quinone + NADH + H(+) = a quinol + NAD(+). It catalyses the reaction a quinone + NADPH + H(+) = a quinol + NADP(+). This chain is NAD(P)H dehydrogenase (quinone), found in Halorhodospira halophila (strain DSM 244 / SL1) (Ectothiorhodospira halophila (strain DSM 244 / SL1)).